The chain runs to 21 residues: Hemocyanin subunit 6 (21 aa).

It belongs to the tyrosinase family. Hemocyanin subfamily. In terms of tissue distribution, hemolymph.

The protein resides in the secreted. Its subcellular location is the extracellular space. In terms of biological role, hemocyanins are copper-containing oxygen carriers occurring freely dissolved in the hemolymph of many mollusks and arthropods. The chain is Hemocyanin subunit 6 from Maja squinado (Mediterranean spider crab).